An 819-amino-acid chain; its full sequence is Plastid division protein CDP1, chloroplastic (819 aa).

The transit peptide at 1-76 (MPVAYTFPVL…NAAGGGIHVV (76 aa)) directs the protein to the chloroplast. Residues 77–572 (DNAPSRTSSL…NKIWDEWLSQ (496 aa)) lie on the Stromal side of the membrane. A coiled-coil region spans residues 419 to 439 (EAEALEKLKQLESNSDSAVRN). Residues 573–593 (SSLIGRVSVVALLGCTVFFSL) traverse the membrane as a helical segment. Residues 594–819 (KLSGIRSGRL…FCQSDIQIQK (226 aa)) are Chloroplast intermembrane-facing. A coiled-coil region spans residues 762–782 (IAGEAAEIEALLEEAAELVDE).

As to quaternary structure, self-interacts. Interacts (via N-terminus) with ARC3 (via MORN domains). Binds (via N-terminus) to FTSZ2 proteins, FTSZ2-1 and FTSZ2-2. Recruited ARC3 to the middle of the plastid where subsequent complex made of CDP1/PARC6, ARC3 and FtsZ proteins can form; this complex enhances the dynamics of Z rings during chloroplast division. Interacts (via C-terminus) with PDV1 (via C-terminus). Interacts with MIND1. As to expression, exclusively expressed in young green tissues such as young cotyledons, shoot apex, emerging leaves and budding inflorescence.

The protein localises to the plastid. The protein resides in the chloroplast inner membrane. Its function is as follows. Component of the plastid division machinery required for PDV1 localization to constriction sites. Involved in chloroplast division site placement. Required for the proper formation of FtsZ rings at the division site in nongreen plastids (e.g. etioplasts). Inhibits FtsZ assembly, functioning as an antagonistic regulator of FtsZ dynamics against ARC6, by recruiting ARC3 to the middle of the plastid to facilitate its interaction with FtsZ proteins. Required during stromule biogenesis in the leaf epidermis, especially in non-mesophyll cells plastids. The chain is Plastid division protein CDP1, chloroplastic from Arabidopsis thaliana (Mouse-ear cress).